Here is a 157-residue protein sequence, read N- to C-terminus: Ribosome maturation factor RimP (157 aa).

This sequence belongs to the RimP family.

Its subcellular location is the cytoplasm. Functionally, required for maturation of 30S ribosomal subunits. This is Ribosome maturation factor RimP from Helicobacter hepaticus (strain ATCC 51449 / 3B1).